We begin with the raw amino-acid sequence, 508 residues long: MFS-type transporter penM (508 aa).

Residues 1–60 form a disordered region; sequence MKDGEETPSVDGSTSASNREKLGTDLEIGPVDLSDGGKEEKVKDPNLVDWDGPDDPENPL. Residues 35–46 show a composition bias toward basic and acidic residues; the sequence is DGGKEEKVKDPN. Asparagine 61 is a glycosylation site (N-linked (GlcNAc...) asparagine). A helical membrane pass occupies residues 73 to 93; the sequence is SIALITFLTPLGSSMFAPGVG. A glycan (N-linked (GlcNAc...) asparagine) is linked at asparagine 100. The next 6 membrane-spanning stretches (helical) occupy residues 108 to 128, 143 to 163, 166 to 186, 197 to 217, 225 to 245, and 299 to 319; these read SFVVSVYLLGYCFGPLIIAPL, ILYVIWTIACAFAPEIGSLVV, FFAGLAGSCPLTIGAGSIADM, AAWALGPLIGPVVGPVAGAYL, WSFYVLAMAAGAITISSLFSI, and PIVFLLSLYVGVIYGYLYLLF. The Peroxisomal targeting signal signature appears at 293-307; the sequence is KMLFRSPIVFLLSLY. Asparagine 331 is a glycosylation site (N-linked (GlcNAc...) asparagine). A run of 5 helical transmembrane segments spans residues 335-355, 379-399, 407-427, 435-457, and 475-495; these read GAVGLTYLGLGVGSLIGLFLI, LPPMVPGAIFVPISLFMYGWT, IVPIIGTSFLGTGMMITFMCV, FTNYAASVMAANTVFRSLAGALL, and SLLGFIALAFCALPVIFWIYG.

The protein belongs to the major facilitator superfamily.

Its subcellular location is the peroxisome membrane. Functionally, MFS-type transporter involved in penicillin production, most likely through the translocation of isopenicillin N from the cytosol to the peroxisomal lumen across the peroxisomal membrane. The protein is MFS-type transporter penM of Penicillium rubens (strain ATCC 28089 / DSM 1075 / NRRL 1951 / Wisconsin 54-1255) (Penicillium chrysogenum).